Consider the following 76-residue polypeptide: Zinc finger protein 706 (76 aa).

The segment covering 1 to 13 (MARGQQKIQSQQK) has biased composition (low complexity). 2 disordered regions span residues 1-32 (MARG…QKAA) and 53-76 (TFKQ…DVQA). Composition is skewed to basic and acidic residues over residues 17–31 (KQAE…DQKA) and 53–62 (TFKQHFESKH). A C2H2-type zinc finger spans residues 39-62 (YTCTVCRTQMPDPKTFKQHFESKH).

The protein localises to the cytoplasm. It is found in the nucleus. Its function is as follows. Transcription repressor involved in the exit of embryonic stem cells (ESCs) from self-renewal. The chain is Zinc finger protein 706 from Gallus gallus (Chicken).